The chain runs to 1404 residues: Proteoglycan 4 (1404 aa).

The signal sequence occupies residues 1–24 (MAWKTLPIYLLLLLSVFVIQQVSS). 2 consecutive SMB domains span residues 26-69 (DLSS…AELS) and 66-108 (AELS…AEVH). 14 disulfide bridges follow: Cys30-Cys34, Cys30-Cys46, Cys34-Cys64, Cys44-Cys46, Cys44-Cys57, Cys50-Cys56, Cys57-Cys64, Cys70-Cys74, Cys70-Cys86, Cys74-Cys104, Cys84-Cys86, Cys84-Cys97, Cys90-Cys96, and Cys97-Cys104. Positions 111–966 (TSPPSSKKAP…TTQVTSTTTQ (856 aa)) are disordered. O-linked (GalNAc...) serine glycosylation is found at Ser123 and Ser136. The segment covering 132-146 (TTKRSPKPPNKKKTK) has biased composition (basic residues). Over residues 166 to 177 (SSSSSSSSSSSS) the composition is skewed to low complexity. Residues 193 to 205 (ELQKKLKVKDNKK) are compositionally biased toward basic and acidic residues. An N-linked (GlcNAc...) asparagine glycan is attached at Asn206. Over residues 235 to 252 (TPDTSTTQHNKVSTSPKI) the composition is skewed to polar residues. Residues Thr240 and Thr253 are each glycosylated (O-linked (GalNAc...) threonine). Positions 266–276 (PNSDTSKETSL) are enriched in polar residues. Thr277, Thr291, and Thr305 each carry an O-linked (GalNAc...) threonine glycan. Residue Ser306 is glycosylated (O-linked (GalNAc...) serine). Thr310 carries O-linked (GalNAc...) threonine glycosylation. A glycan (O-linked (GalNAc...) serine) is linked at Ser317. O-linked (GalNAc...) threonine glycans are attached at residues Thr324, Thr332, and Thr338. Composition is skewed to low complexity over residues 329–348 (AKPT…TTPK) and 356–405 (KEPA…KEPA). The stretch at 348-355 (KEPTPTTP) is repeat 1. Residues 348–855 (KEPTPTTPKE…TPETPPPTTS (508 aa)) are 59 X 8 AA repeats of K-X-P-X-P-T-T-X. Residues 356-363 (KEPASTTP) form a 2; approximate repeat. Copy 3 of the repeat occupies 364–371 (KEPTPTTI). Thr367 carries an O-linked (GalNAc...) threonine glycan. A 4; approximate repeat occupies 372-378 (KSAPTTP). O-linked (GalNAc...) serine glycosylation is present at Ser373. Residues Thr376, Thr384, and Thr385 are each glycosylated (O-linked (GalNAc...) threonine). Repeat 5 spans residues 379-386 (KEPAPTTT). One copy of the 6; approximate repeat lies at 387 to 393 (KSAPTTP). A glycan (O-linked (GalNAc...) serine) is linked at Ser388. O-linked (GalNAc...) threonine glycosylation is found at Thr391, Thr399, Thr400, Thr407, Thr408, Thr415, and Thr423. 4 tandem repeats follow at residues 394–401 (KEPAPTTT), 402–409 (KEPAPTTP), 410–417 (KEPAPTTT), and 418–425 (KEPAPTTT). Residues 413 to 431 (APTTTKEPAPTTTKSAPTT) show a composition bias toward low complexity. Residues 426–432 (KSAPTTP) form an 11; approximate repeat. Ser427 carries O-linked (GalNAc...) serine glycosylation. O-linked (GalNAc...) threonine glycosylation is found at Thr430, Thr438, Thr439, Thr446, Thr447, Thr454, and Thr455. Composition is skewed to pro residues over residues 432-467 (PKEP…PKEP) and 476-506 (PTTP…PKEP). A run of 4 repeats spans residues 433-440 (KEPAPTTP), 441-448 (KKPAPTTP), 449-456 (KEPAPTTP), and 457-464 (KEPTPTTP). Residues 465 to 471 (KEPAPTT) form a 16; approximate repeat. Copy 17 of the repeat occupies 472–479 (KEPAPTTP). Residues Thr477, Thr478, Thr485, Thr493, Thr494, Thr501, Thr502, and Thr509 are each glycosylated (O-linked (GalNAc...) threonine). Residues 480–487 (KEPAPTAP) form an 18; approximate repeat. One copy of the 19; approximate repeat lies at 488–495 (KKPAPTTP). Tandem repeats lie at residues 496–503 (KEPAPTTP), 504–511 (KEPAPTTT), 512–519 (KEPSPTTP), and 520–527 (KEPAPTTT). Residues 523–561 (APTTTKSAPTTTKEPAPTTTKSAPTTPKEPSPTTTKEPA) are compositionally biased toward low complexity. Thr525 is a glycosylation site (O-linked (GalNAc...) threonine). The 24; approximate repeat unit spans residues 528–534 (KSAPTTT). Ser529 is a glycosylation site (O-linked (GalNAc...) serine). 3 O-linked (GalNAc...) threonine glycosylation sites follow: Thr532, Thr540, and Thr541. The stretch at 535-542 (KEPAPTTT) is repeat 25. The stretch at 543-549 (KSAPTTP) is one 26; approximate repeat. 6 repeat units span residues 550–557 (KEPSPTTT), 558–565 (KEPAPTTP), 566–573 (KEPAPTTP), 574–581 (KKPAPTTP), 582–589 (KEPAPTTP), and 590–597 (KEPAPTTT). A glycan (O-linked (GalNAc...) serine) is linked at Ser553. O-linked (GalNAc...) threonine glycans are attached at residues Thr555, Thr563, Thr564, Thr571, Thr572, Thr579, Thr580, Thr587, Thr588, Thr595, Thr603, Thr604, Thr611, Thr612, Thr616, Thr619, and Thr627. The segment covering 562–592 (PTTPKEPAPTTPKKPAPTTPKEPAPTTPKEP) has biased composition (pro residues). The stretch at 598-605 (KKPAPTTP) is one 33; approximate repeat. Positions 602–611 (PTTPKEPAPT) are enriched in pro residues. The stretch at 606–613 (KEPAPTTP) is repeat 34. The segment covering 612 to 636 (TPKETAPTTPKKLTPTTPEKLAPTT) has biased composition (low complexity). The 35; approximate repeat unit spans residues 614 to 621 (KETAPTTP). A 36; approximate repeat occupies 622–629 (KKLTPTTP). Residues 638 to 645 (EKPAPTTP) form a 37; approximate repeat. Pro residues predominate over residues 653 to 667 (PEEPTPTTPEEPAPT). Residues 662-669 (EEPAPTTP) form a 38; approximate repeat. 9 O-linked (GalNAc...) threonine glycosylation sites follow: Thr676, Thr683, Thr684, Thr691, Thr692, Thr699, Thr700, Thr704, and Thr707. Over residues 677-699 (PKEPAPTTPKEPAPTTPKEPAPT) the composition is skewed to pro residues. Repeat copies occupy residues 678–685 (KEPAPTTP), 686–693 (KEPAPTTP), and 694–701 (KEPAPTTP). A compositionally biased stretch (low complexity) spans 700–721 (TPKETAPTTPKGTAPTTLKEPA). A 42; approximate repeat occupies 702 to 709 (KETAPTTP). The stretch at 710–717 (KGTAPTTL) is one 43; approximate repeat. The stretch at 718-725 (KEPAPTTP) is repeat 44. Residues Thr723, Thr724, and Thr736 are each glycosylated (O-linked (GalNAc...) threonine). A compositionally biased stretch (low complexity) spans 728–761 (PAPKELAPTTTKEPTSTTSDKPAPTTPKGTAPTT). The stretch at 731–738 (KELAPTTT) is one 45; approximate repeat. The stretch at 739–746 (KEPTSTTS) is one 46; approximate repeat. The 47; approximate repeat unit spans residues 747 to 754 (DKPAPTTP). One copy of the 48; approximate repeat lies at 755 to 762 (KGTAPTTP). The segment covering 762–776 (PKEPAPTTPKEPAPT) has biased composition (pro residues). A run of 2 repeats spans residues 763-770 (KEPAPTTP) and 771-778 (KEPAPTTP). O-linked (GalNAc...) threonine glycosylation is found at Thr768, Thr769, Thr776, and Thr777. The segment covering 777–790 (TPKGTAPTTLKEPA) has biased composition (low complexity). One copy of the 51; approximate repeat lies at 779–786 (KGTAPTTL). Repeat 52 spans residues 787-794 (KEPAPTTP). Residues Thr792, Thr793, and Thr805 are each glycosylated (O-linked (GalNAc...) threonine). Positions 797 to 830 (PAPKELAPTTTKGPTSTTSDKPAPTTPKETAPTT) are enriched in low complexity. The 53; approximate repeat unit spans residues 800-807 (KELAPTTT). The 54; approximate repeat unit spans residues 808 to 815 (KGPTSTTS). O-linked (GalNAc...) serine glycosylation is present at Ser812. A 55; approximate repeat occupies 816–823 (DKPAPTTP). The 56; approximate repeat unit spans residues 824-831 (KETAPTTP). Thr829, Thr837, and Thr838 each carry an O-linked (GalNAc...) threonine glycan. Over residues 831 to 853 (PKEPAPTTPKKPAPTTPETPPPT) the composition is skewed to pro residues. 2 consecutive repeat copies span residues 832–839 (KEPAPTTP) and 840–847 (KKPAPTTP). One copy of the 59; approximate repeat lies at 848–855 (ETPPPTTS). Low complexity predominate over residues 854-866 (TSEVSTPTTTKEP). An O-linked (GalNAc...) serine glycan is attached at Ser892. The span at 899 to 914 (PTTKTPAATKPEMTTT) shows a compositional bias: low complexity. O-linked (GalNAc...) threonine glycosylation is present at Thr900. Basic and acidic residues predominate over residues 915–926 (AKDKTTERDLRT). A compositionally biased stretch (low complexity) spans 927–966 (TPETTTAAPKMTKETATTTEKTTESKITATTTQVTSTTTQ). 2 O-linked (GalNAc...) threonine glycosylation sites follow: Thr930 and Thr931. An O-linked (GalNAc...) serine glycan is attached at Ser962. Residues Thr963, Thr968, Thr975, Thr978, Thr979, and Thr980 are each glycosylated (O-linked (GalNAc...) threonine). A disordered region spans residues 992–1104 (ITTTEIMNKP…EDAGGAEGET (113 aa)). The span at 999 to 1012 (NKPEETAKPKDRAT) shows a compositional bias: basic and acidic residues. A compositionally biased stretch (basic residues) spans 1026 to 1047 (KAPKKPTSTKKPKTMPRVRKPK). Residue Thr1039 is glycosylated (O-linked (GalNAc...) threonine). The span at 1048 to 1060 (TTPTPRKMTSTMP) shows a compositional bias: low complexity. Residues 1073–1085 (LQTTTRPNQTPNS) show a composition bias toward polar residues. Cys1146 and Cys1403 are disulfide-bonded. Hemopexin repeat units follow at residues 1148 to 1191 (GKPV…VWGI) and 1192 to 1239 (PSPI…FGGL). Asn1159 is a glycosylation site (N-linked (GlcNAc...) asparagine). Residue Thr1161 is glycosylated (O-linked (GalNAc...) threonine).

In terms of assembly, homodimer; disulfide-linked. Post-translationally, N-glycosylated. O-glycosylated; contains glycosaminoglycan chondroitin sulfate and keratan sulfate. O-glycosylated with sialylated oligosaccharides which are predominantly represented by the monosialylated core type I structure, NeuNAcalpha2-3Galbeta1-3GalNAc, with smaller amounts of disialylated O-glycans. In terms of processing, the disulfide bond between Cys-1146 and Cys-1403 is essential for protein cleavage. Post-translationally, proteolytically cleaved by cathepsin CTSG. As to expression, highly expressed in synovial tissue, cartilage and liver and weakly in heart and lung. Isoform B is expressed in kidney, lung, liver, heart and brain. Isoform C and isoform D are widely expressed.

The protein resides in the secreted. Its function is as follows. Plays a role in boundary lubrication within articulating joints. Prevents protein deposition onto cartilage from synovial fluid by controlling adhesion-dependent synovial growth and inhibiting the adhesion of synovial cells to the cartilage surface. Isoform F plays a role as a growth factor acting on the primitive cells of both hematopoietic and endothelial cell lineages. The chain is Proteoglycan 4 (PRG4) from Homo sapiens (Human).